Consider the following 373-residue polypeptide: MAEQDYIFELRGVSKYFDDTCALENIDLQIRNGEFLTLLGPSGCGKTTILRLLSGFETPSSGDVILSGRVVNDVPPEQRQVNTVFQNYALFPHMTVRDNVGFGLKMQKRPKDEIARRVREALKMVHLEQFGDRKPARLSGGQQQRVAIARAVVNNPYVLLLDEPFSALDFKLRKKMQLEIKHLQRQLGITFVFVTHDQEEAFAMSDRVVVMNDGRIEQIGSPQEIYEEPANLYVARFVGDINILDGTITARRNGVLYDATLEGVPFPVQTGKQFETGDRVKVLLRPEDIRLHMMHDLPDGEYFTGAIEETVYKGATVDIVVRLDSPSEGQPGKQLLVAEFFNEDDEEINYTPGERVAVTWVNGWEVVLGDDGE.

Residues 8–238 (FELRGVSKYF…PANLYVARFV (231 aa)) enclose the ABC transporter domain. Residue 40–47 (GPSGCGKT) coordinates ATP.

The protein belongs to the ABC transporter superfamily. Spermidine/putrescine importer (TC 3.A.1.11.1) family. As to quaternary structure, the complex is composed of two ATP-binding proteins (PotA), two transmembrane proteins (PotB and PotC) and a solute-binding protein (PotD).

The protein localises to the cell inner membrane. The catalysed reaction is ATP + H2O + polyamine-[polyamine-binding protein]Side 1 = ADP + phosphate + polyamineSide 2 + [polyamine-binding protein]Side 1.. In terms of biological role, part of the ABC transporter complex PotABCD involved in spermidine/putrescine import. Responsible for energy coupling to the transport system. The polypeptide is Spermidine/putrescine import ATP-binding protein PotA (Oleidesulfovibrio alaskensis (strain ATCC BAA-1058 / DSM 17464 / G20) (Desulfovibrio alaskensis)).